The chain runs to 493 residues: NADH-quinone oxidoreductase subunit N (493 aa).

A run of 14 helical transmembrane segments spans residues 8–28 (ALLP…AIAI), 34–54 (LVFW…PHAS), 71–91 (GLFF…LCLA), 102–122 (EIFV…SSAH), 123–143 (LAMF…MIAY), 157–177 (YLML…MVYG), 200–220 (ALAG…LVPF), 232–252 (PTPV…ALLL), 266–286 (FLCV…LLAL), 294–314 (LLAY…VAAG), 325–345 (IAFY…AISA), 370–390 (AAVL…VGFV), 405–427 (WPLV…RVVL), and 443–463 (PAAG…GLFP). Residues 473–493 (VPQPPPTADSPQRLTATGGLP) are disordered.

The protein belongs to the complex I subunit 2 family. In terms of assembly, NDH-1 is composed of 14 different subunits. Subunits NuoA, H, J, K, L, M, N constitute the membrane sector of the complex.

It localises to the cell inner membrane. The enzyme catalyses a quinone + NADH + 5 H(+)(in) = a quinol + NAD(+) + 4 H(+)(out). NDH-1 shuttles electrons from NADH, via FMN and iron-sulfur (Fe-S) centers, to quinones in the respiratory chain. The immediate electron acceptor for the enzyme in this species is believed to be ubiquinone. Couples the redox reaction to proton translocation (for every two electrons transferred, four hydrogen ions are translocated across the cytoplasmic membrane), and thus conserves the redox energy in a proton gradient. This chain is NADH-quinone oxidoreductase subunit N, found in Methylococcus capsulatus (strain ATCC 33009 / NCIMB 11132 / Bath).